The primary structure comprises 220 residues: MSLNFFDQFMSPTLLGVPLIAVAMMFPWTLLPTPTNRWLNNRTLTLQNWFIGRFTNQLLQPLNTGGHKWAMILMSLNLLGLLPYTFTPTTQLSLNMGLAIPFWLATVLLGLRNQPTAALGHLLPEGTPTLLIPILIIIETISLLIRPFALGVRLTANLTAGHLLMQLIATAAFVLLPMMPTVALLTTLVLFLLTLLEIAVAMIQAYVFVLLLSLYLQENV.

6 helical membrane-spanning segments follow: residues 12–32 (PTLL…TLLP), 69–89 (WAMI…FTPT), 91–111 (QLSL…LLGL), 130–150 (LLIP…PFAL), 158–178 (LTAG…LLPM), and 183–203 (ALLT…VAMI).

This sequence belongs to the ATPase A chain family. In terms of assembly, component of the ATP synthase complex composed at least of ATP5F1A/subunit alpha, ATP5F1B/subunit beta, ATP5MC1/subunit c (homooctomer), MT-ATP6/subunit a, MT-ATP8/subunit 8, ATP5ME/subunit e, ATP5MF/subunit f, ATP5MG/subunit g, ATP5MK/subunit k, ATP5MJ/subunit j, ATP5F1C/subunit gamma, ATP5F1D/subunit delta, ATP5F1E/subunit epsilon, ATP5PF/subunit F6, ATP5PB/subunit b, ATP5PD/subunit d, ATP5PO/subunit OSCP. ATP synthase complex consists of a soluble F(1) head domain (subunits alpha(3) and beta(3)) - the catalytic core - and a membrane F(0) domain - the membrane proton channel (subunits c, a, 8, e, f, g, k and j). These two domains are linked by a central stalk (subunits gamma, delta, and epsilon) rotating inside the F1 region and a stationary peripheral stalk (subunits F6, b, d, and OSCP). Interacts with DNAJC30; interaction is direct.

The protein resides in the mitochondrion inner membrane. It catalyses the reaction H(+)(in) = H(+)(out). Subunit a, of the mitochondrial membrane ATP synthase complex (F(1)F(0) ATP synthase or Complex V) that produces ATP from ADP in the presence of a proton gradient across the membrane which is generated by electron transport complexes of the respiratory chain. ATP synthase complex consist of a soluble F(1) head domain - the catalytic core - and a membrane F(1) domain - the membrane proton channel. These two domains are linked by a central stalk rotating inside the F(1) region and a stationary peripheral stalk. During catalysis, ATP synthesis in the catalytic domain of F(1) is coupled via a rotary mechanism of the central stalk subunits to proton translocation. With the subunit c (ATP5MC1), forms the proton-conducting channel in the F(0) domain, that contains two crucial half-channels (inlet and outlet) that facilitate proton movement from the mitochondrial intermembrane space (IMS) into the matrix. Protons are taken up via the inlet half-channel and released through the outlet half-channel, following a Grotthuss mechanism. The sequence is that of ATP synthase F(0) complex subunit a from Latimeria chalumnae (Coelacanth).